The following is a 202-amino-acid chain: Protein-methionine-sulfoxide reductase heme-binding subunit MsrQ (202 aa).

The next 5 helical transmembrane spans lie at 8 to 28 (IVWL…WLFW), 82 to 102 (LWCF…ELGI), 116 to 136 (PYLT…VTST), 149 to 169 (LLHN…LWSV), and 171 to 191 (IVSP…TWRY).

This sequence belongs to the MsrQ family. Heterodimer of a catalytic subunit (MsrP) and a heme-binding subunit (MsrQ). FMN is required as a cofactor. Requires heme b as cofactor.

The protein resides in the cell inner membrane. Its function is as follows. Part of the MsrPQ system that repairs oxidized periplasmic proteins containing methionine sulfoxide residues (Met-O), using respiratory chain electrons. Thus protects these proteins from oxidative-stress damage caused by reactive species of oxygen and chlorine generated by the host defense mechanisms. MsrPQ is essential for the maintenance of envelope integrity under bleach stress, rescuing a wide series of structurally unrelated periplasmic proteins from methionine oxidation. MsrQ provides electrons for reduction to the reductase catalytic subunit MsrP, using the quinone pool of the respiratory chain. The sequence is that of Protein-methionine-sulfoxide reductase heme-binding subunit MsrQ from Klebsiella pneumoniae subsp. pneumoniae (strain ATCC 700721 / MGH 78578).